Reading from the N-terminus, the 352-residue chain is Ion-translocating oxidoreductase complex subunit D (352 aa).

The next 5 helical transmembrane spans lie at 20-40, 42-62, 78-109, 123-143, and 148-168; these read IMLL…WFFG, GTLV…ALVL, ALLT…VIIA, PAMI…TSWL, and IAVN…GHTA. Thr187 is modified (FMN phosphoryl threonine). A run of 5 helical transmembrane segments spans residues 214-234, 242-262, 267-287, 301-321, and 322-342; these read ILAG…GVWL, WHIP…GWLF, LAAP…FFIL, LIFG…GGYP, and DGVA…DYYT.

The protein belongs to the NqrB/RnfD family. The complex is composed of six subunits: RsxA, RsxB, RsxC, RsxD, RsxE and RsxG. It depends on FMN as a cofactor.

Its subcellular location is the cell inner membrane. Functionally, part of a membrane-bound complex that couples electron transfer with translocation of ions across the membrane. Required to maintain the reduced state of SoxR. The sequence is that of Ion-translocating oxidoreductase complex subunit D from Escherichia coli O139:H28 (strain E24377A / ETEC).